A 311-amino-acid polypeptide reads, in one-letter code: L-lactate dehydrogenase (311 aa).

NAD(+)-binding positions include Val12, Asp33, Lys38, Tyr63, and 77-78 (GA). Residues Gln80, Arg86, and 118–121 (NPVD) contribute to the substrate site. NAD(+) is bound by residues 116–118 (VTN) and Ser141. 146–149 (DSAR) serves as a coordination point for substrate. Beta-D-fructose 1,6-bisphosphate is bound by residues Arg151 and His166. The Proton acceptor role is filled by His173. Tyr219 is modified (phosphotyrosine). Residue Thr228 coordinates substrate.

The protein belongs to the LDH/MDH superfamily. LDH family. In terms of assembly, homotetramer.

Its subcellular location is the cytoplasm. The enzyme catalyses (S)-lactate + NAD(+) = pyruvate + NADH + H(+). The protein operates within fermentation; pyruvate fermentation to lactate; (S)-lactate from pyruvate: step 1/1. Its activity is regulated as follows. Allosterically activated by fructose 1,6-bisphosphate (FBP). In terms of biological role, catalyzes the conversion of lactate to pyruvate. The protein is L-lactate dehydrogenase of Thermoanaerobacter pseudethanolicus (strain ATCC 33223 / 39E) (Clostridium thermohydrosulfuricum).